We begin with the raw amino-acid sequence, 187 residues long: Peptide deformylase (187 aa).

Fe cation contacts are provided by C107 and H149. Residue E150 is part of the active site. H153 contributes to the Fe cation binding site.

This sequence belongs to the polypeptide deformylase family. The cofactor is Fe(2+).

It carries out the reaction N-terminal N-formyl-L-methionyl-[peptide] + H2O = N-terminal L-methionyl-[peptide] + formate. Its function is as follows. Removes the formyl group from the N-terminal Met of newly synthesized proteins. Requires at least a dipeptide for an efficient rate of reaction. N-terminal L-methionine is a prerequisite for activity but the enzyme has broad specificity at other positions. This is Peptide deformylase from Synechocystis sp. (strain ATCC 27184 / PCC 6803 / Kazusa).